Reading from the N-terminus, the 427-residue chain is MRYDQEAGSSSHSLPSGSSSHSLPPTEDTPLLGPRTLSSQPKTFANVFIAIVGAGVLGLPYTFKKTGWLLGLLTLLFVSSLTFFCMMLLVHTRRKLESLSGFNSITSFGDLGESVCGPAGRLVVDVMLVLSQSGFCVSYLIFVATTMANLLSRGTEHILGLDAASIYLWGCFPFQLGLNSIPSLTHLAPLSIFADIVDVAATLVVMVQDVFIFLKRRPPLRVFGGVSVFFYGLGVAVYAFEGIGMVLPLELEAKYKDKFGRALGLAMGLISIMYGAFGLLGYMAYGEETKDIITTNLGTGVVSTLVQLGLAINLFFTFPLMMQPVYEVVERRLCSSRYSVWVRWATVLVVTLVALLVPNFADFLSLVGSSVCVVLGFVLPSLFHLQAFKNELSITRIVVDVLVFLIGVMIAITGTWTAVHEILTSKA.

The segment at 1–35 is disordered; sequence MRYDQEAGSSSHSLPSGSSSHSLPPTEDTPLLGPR. The Cytoplasmic segment spans residues 1–42; sequence MRYDQEAGSSSHSLPSGSSSHSLPPTEDTPLLGPRTLSSQPK. The segment covering 8–24 has biased composition (low complexity); sequence GSSSHSLPSGSSSHSLP. The chain crosses the membrane as a helical span at residues 43–63; the sequence is TFANVFIAIVGAGVLGLPYTF. Topologically, residues 64–69 are vacuolar; it reads KKTGWL. A helical membrane pass occupies residues 70–90; the sequence is LGLLTLLFVSSLTFFCMMLLV. Residues 91-122 are Cytoplasmic-facing; it reads HTRRKLESLSGFNSITSFGDLGESVCGPAGRL. A helical transmembrane segment spans residues 123-143; the sequence is VVDVMLVLSQSGFCVSYLIFV. At 144–157 the chain is on the vacuolar side; it reads ATTMANLLSRGTEH. The chain crosses the membrane as a helical span at residues 158 to 178; the sequence is ILGLDAASIYLWGCFPFQLGL. Over 179–186 the chain is Cytoplasmic; that stretch reads NSIPSLTH. The chain crosses the membrane as a helical span at residues 187–207; sequence LAPLSIFADIVDVAATLVVMV. Over 208–227 the chain is Vacuolar; sequence QDVFIFLKRRPPLRVFGGVS. Residues 228–248 traverse the membrane as a helical segment; that stretch reads VFFYGLGVAVYAFEGIGMVLP. Residues 249-262 lie on the Cytoplasmic side of the membrane; that stretch reads LELEAKYKDKFGRA. A helical membrane pass occupies residues 263 to 283; it reads LGLAMGLISIMYGAFGLLGYM. The Vacuolar segment spans residues 284-300; the sequence is AYGEETKDIITTNLGTG. The chain crosses the membrane as a helical span at residues 301–321; sequence VVSTLVQLGLAINLFFTFPLM. Over 322 to 339 the chain is Cytoplasmic; that stretch reads MQPVYEVVERRLCSSRYS. Residues 340–360 traverse the membrane as a helical segment; that stretch reads VWVRWATVLVVTLVALLVPNF. Over 361-362 the chain is Vacuolar; sequence AD. A helical membrane pass occupies residues 363–383; sequence FLSLVGSSVCVVLGFVLPSLF. Topologically, residues 384 to 396 are cytoplasmic; it reads HLQAFKNELSITR. The chain crosses the membrane as a helical span at residues 397–417; it reads IVVDVLVFLIGVMIAITGTWT. The Vacuolar portion of the chain corresponds to 418 to 427; the sequence is AVHEILTSKA.

This sequence belongs to the amino acid/polyamine transporter 2 family. Amino acid/auxin permease (AAAP) (TC 2.A.18.8) subfamily. In terms of tissue distribution, ubiquitous.

It localises to the vacuole membrane. Its function is as follows. Translocates preferentially neutral amino acids and to a lesser extent aromatic amino acids from the vacuole to the cytoplasm. Requires ATP for function. The protein is Amino acid transporter AVT3A of Arabidopsis thaliana (Mouse-ear cress).